The following is a 278-amino-acid chain: Phosphatidylglycerol--prolipoprotein diacylglyceryl transferase (278 aa).

Helical transmembrane passes span 21–41 (WYGI…QASV), 54–74 (IIFW…VIFQ), and 88–108 (IWHG…TGII). Residue Arg136 coordinates a 1,2-diacyl-sn-glycero-3-phospho-(1'-sn-glycerol). 2 helical membrane-spanning segments follow: residues 176-196 (QPTF…LILL) and 234-254 (IRVA…IMII).

The protein belongs to the Lgt family.

The protein localises to the cell membrane. It catalyses the reaction L-cysteinyl-[prolipoprotein] + a 1,2-diacyl-sn-glycero-3-phospho-(1'-sn-glycerol) = an S-1,2-diacyl-sn-glyceryl-L-cysteinyl-[prolipoprotein] + sn-glycerol 1-phosphate + H(+). Its pathway is protein modification; lipoprotein biosynthesis (diacylglyceryl transfer). Its function is as follows. Catalyzes the transfer of the diacylglyceryl group from phosphatidylglycerol to the sulfhydryl group of the N-terminal cysteine of a prolipoprotein, the first step in the formation of mature lipoproteins. In Staphylococcus xylosus, this protein is Phosphatidylglycerol--prolipoprotein diacylglyceryl transferase.